Consider the following 331-residue polypeptide: Glutamyl-Q tRNA(Asp) synthetase (331 aa).

Positions 1 to 30 (MVQQAVIQRSANQQLSNQRSANQRATNQPT) are enriched in polar residues. Residues 1–36 (MVQQAVIQRSANQQLSNQRSANQRATNQPTEYVGRF) form a disordered region. L-glutamate-binding positions include 35 to 39 (RFAPS) and Glu-71. The 'HIGH' region signature appears at 38 to 48 (PSPSGDLHFGS). Cys-127, Cys-129, Tyr-141, and Cys-145 together coordinate Zn(2+). Tyr-198 and Arg-216 together coordinate L-glutamate. The 'KMSKS' region signature appears at 254–258 (KLSKQ). Lys-257 serves as a coordination point for ATP.

The protein belongs to the class-I aminoacyl-tRNA synthetase family. GluQ subfamily. Requires Zn(2+) as cofactor.

Catalyzes the tRNA-independent activation of glutamate in presence of ATP and the subsequent transfer of glutamate onto a tRNA(Asp). Glutamate is transferred on the 2-amino-5-(4,5-dihydroxy-2-cyclopenten-1-yl) moiety of the queuosine in the wobble position of the QUC anticodon. The chain is Glutamyl-Q tRNA(Asp) synthetase from Yersinia pseudotuberculosis serotype I (strain IP32953).